A 356-amino-acid chain; its full sequence is Leucoanthocyanidin dioxygenase (356 aa).

The substrate site is built by tyrosine 142 and lysine 213. In terms of domain architecture, Fe2OG dioxygenase spans 208-307; that stretch reads LLLQMKINYY…RISWAVFCEP (100 aa). 215-217 contributes to the 2-oxoglutarate binding site; sequence NYY. Histidine 232 contacts Fe cation. Threonine 233 contributes to the substrate binding site. Residues aspartate 234 and histidine 288 each contribute to the Fe cation site. 298–300 provides a ligand contact to 2-oxoglutarate; sequence RIS. Substrate-binding residues include glutamate 306 and lysine 341.

Belongs to the iron/ascorbate-dependent oxidoreductase family. L-ascorbate serves as cofactor. It depends on Fe(2+) as a cofactor. Expressed in young seedlings (at protein level).

The enzyme catalyses a (2R,3S,4S)-leucoanthocyanidin + 2-oxoglutarate + O2 = a 4-H-anthocyanidin with a 3-hydroxy group + succinate + CO2 + 2 H2O. It carries out the reaction (2R,3S,4S)-3,4-leucopelargonidin + 2-oxoglutarate + O2 = (4S)-2,3-dehydroleucopelargonidin + succinate + CO2 + H2O + H(+). It catalyses the reaction (2R,3S,4S)-leucocyanidin + 2-oxoglutarate + O2 = (4S)-2,3-dehydroleucocyanidin + succinate + CO2 + H2O + H(+). It participates in pigment biosynthesis; anthocyanin biosynthesis. In terms of biological role, involved in anthocyanin and protoanthocyanidin biosynthesis by catalyzing the oxidation of leucoanthocyanidins into anthocyanidins. Possesses low flavonol synthase activity in vitro towards dihydrokaempferol and dihydroquercetin producing kaempferol and quercitin, respectively. In Arabidopsis thaliana (Mouse-ear cress), this protein is Leucoanthocyanidin dioxygenase (LDOX).